Reading from the N-terminus, the 85-residue chain is UPF0386 protein HNE_3437 (85 aa).

The protein belongs to the UPF0386 family.

The sequence is that of UPF0386 protein HNE_3437 from Hyphomonas neptunium (strain ATCC 15444).